The sequence spans 327 residues: Aspartate--ammonia ligase (327 aa).

Belongs to the class-II aminoacyl-tRNA synthetase family. AsnA subfamily.

Its subcellular location is the cytoplasm. The catalysed reaction is L-aspartate + NH4(+) + ATP = L-asparagine + AMP + diphosphate + H(+). Its pathway is amino-acid biosynthesis; L-asparagine biosynthesis; L-asparagine from L-aspartate (ammonia route): step 1/1. This chain is Aspartate--ammonia ligase, found in Bacillus cereus (strain AH187).